Consider the following 63-residue polypeptide: UPF0512 protein X (63 aa).

It belongs to the UPF0512 family.

The sequence is that of UPF0512 protein X from Dictyostelium discoideum (Social amoeba).